A 393-amino-acid chain; its full sequence is Endoplasmic reticulum junction formation protein lunapark-A (393 aa).

Topologically, residues 1 to 45 (MGAVVSRWRAKPSTVEVLEGLDKDIQVLEEYREKNHKQLKLWVYR) are cytoplasmic. The helical transmembrane segment at 46–66 (LLLYSALLYLMACAVVYAWYI) threads the bilayer. The Lumenal segment spans residues 67–69 (PER). Residues 70–90 (MIGKLIVASPFLLFPLLIWLL) traverse the membrane as a helical segment. Topologically, residues 91–393 (RKLLIILYNK…EQDVSAMEVE (303 aa)) are cytoplasmic. The stretch at 95–130 (IILYNKRTERNNEKLEELKAEKKKILEQVMETETYK) forms a coiled coil. The segment at 146-209 (KLELETQPIG…PPEKGLSAST (64 aa)) is disordered. Pro residues predominate over residues 176 to 190 (TGRPPPVPVPGPSVP). Residues 269–294 (CQQCLSHNGMALKEEFEYIAFRCAYC) form a C4-type; plays a role in ER morphology zinc finger. The disordered stretch occupies residues 314-393 (AAEAKTSQDP…EQDVSAMEVE (80 aa)). 2 stretches are compositionally biased toward basic and acidic residues: residues 340–353 (ESKE…KAGD) and 364–383 (EEMK…KSDG).

It belongs to the lunapark family. As to quaternary structure, homodimer; homodimerization requires the C4-type zinc finger motif and decreases during mitosis in a phosphorylation-dependent manner. Post-translationally, phosphorylated. Phosphorylation occurs during interphase. Phosphorylation also occurs during mitosis; these phosphorylations reduce both its homodimerization and the ER three-way tubular junction formation.

Its subcellular location is the endoplasmic reticulum membrane. In terms of biological role, endoplasmic reticulum (ER)-shaping membrane protein that plays a role in determining ER morphology. Involved in the stabilization of nascent three-way ER tubular junctions within the ER network. May also play a role as a curvature-stabilizing protein within three-way ER tubular junction network. This chain is Endoplasmic reticulum junction formation protein lunapark-A (lnpka), found in Danio rerio (Zebrafish).